Consider the following 248-residue polypeptide: Small ribosomal subunit protein uS2 (248 aa).

It belongs to the universal ribosomal protein uS2 family.

The polypeptide is Small ribosomal subunit protein uS2 (Janthinobacterium sp. (strain Marseille) (Minibacterium massiliensis)).